Consider the following 818-residue polypeptide: MYRPNFYESTCLRCSETVYQVDRVGPLKDFTFFHSGCFKCVHCGTKLTLKTYFNNQHKQDDKEVYCSSHVPKSGPGHLDQTSVGIRQALNAPRTNKFVNEQIRGTRSEVDGGPLGGSRQSTPNGYGSREISSPSQNDSDYKYGRFDASALHIAHALKQTEIQKAYNKAREKPIDFYLAREEQAHLEMKHRKEEDDLYRKFASKRAEEDRKIQDEFQDEWERELQRLTHKFEKELATSRRSRDEANILTMRHEQQKEDLEKNMTLRRSKKKESITRKMLEHERYETAALVDRQSSEMLELISARRSEYMQSESIFLDDEFSEGAVPVEYPLNAPIPAPPAVSKFQIYTDPIEFEDVDRIAISVAQEDQKTFTDLVRQLVGRCTTDIEKARTIFRWITVKNLNAMHFDDDLRGDTPMGLLRGIKYGTESYHVLFKRLCSYAGLHCVVIKGYSKSAGYQPGVKFQDSRFRNSWNAVYVAGAWRFVQCNWGARHLVNAKEAPKQGRGKNDSLRYEYDDHYFLTDPREFIYEFYPLQEEWQLLKRPITLREFENLPFVRSLFFRYGLHFADEGYGAVVFTDDTGAATVRIAMPTDMQSCLIFHYNLKFYDSDEELSYDGVSLKRFVMQSVIGNIVAFRVHAPCSGAFLLDIFANAVTPQEYLTGEPMKFKSVCKFKICCEELQTVMVPLPDCASGEWGPTKATRLFGLIPITHQDPLIFAGRSLDLQFRMSRPLTDFMATLHKNGIEEKKLAKYVTHSTLDDIVTFIINFPEEGQYGLDIYTRELGGPQHHHHHNNNNSSSSSGEKHLLTHCCKYLINSSKRN.

Residues 9–76 (STCLRCSETV…SSHVPKSGPG (68 aa)) enclose the LIM zinc-binding domain. The interval 97–141 (FVNEQIRGTRSEVDGGPLGGSRQSTPNGYGSREISSPSQNDSDYK) is disordered. Positions 117–137 (SRQSTPNGYGSREISSPSQND) are enriched in polar residues. The stretch at 216–272 (QDEWERELQRLTHKFEKELATSRRSRDEANILTMRHEQQKEDLEKNMTLRRSKKKES) forms a coiled coil.

Belongs to the transglutaminase-like superfamily. In terms of assembly, interacts with pnut. In terms of tissue distribution, localizes to the neuropil of the embryonic central nervous system (at protein level). Also detected in third instar larval brain (at protein level).

The protein localises to the cytoplasm. The protein resides in the cell cortex. It is found in the cleavage furrow. May act as a modulator of septin function during cytokinesis in the developing nervous system. The sequence is that of Hillarin from Drosophila melanogaster (Fruit fly).